The sequence spans 312 residues: Aspartate carbamoyltransferase catalytic subunit (312 aa).

Positions 58 and 59 each coordinate carbamoyl phosphate. Residue Lys86 coordinates L-aspartate. Carbamoyl phosphate-binding residues include Arg108, His136, and Gln139. Residues Arg169 and Arg223 each contribute to the L-aspartate site. The carbamoyl phosphate site is built by Gly264 and Pro265.

Belongs to the aspartate/ornithine carbamoyltransferase superfamily. ATCase family. In terms of assembly, heterododecamer (2C3:3R2) of six catalytic PyrB chains organized as two trimers (C3), and six regulatory PyrI chains organized as three dimers (R2).

It carries out the reaction carbamoyl phosphate + L-aspartate = N-carbamoyl-L-aspartate + phosphate + H(+). Its pathway is pyrimidine metabolism; UMP biosynthesis via de novo pathway; (S)-dihydroorotate from bicarbonate: step 2/3. Its function is as follows. Catalyzes the condensation of carbamoyl phosphate and aspartate to form carbamoyl aspartate and inorganic phosphate, the committed step in the de novo pyrimidine nucleotide biosynthesis pathway. This Desulforamulus reducens (strain ATCC BAA-1160 / DSM 100696 / MI-1) (Desulfotomaculum reducens) protein is Aspartate carbamoyltransferase catalytic subunit.